We begin with the raw amino-acid sequence, 143 residues long: uncharacterized protein (143 aa).

The tract at residues 13 to 143 is disordered; sequence SLQFPHHRPG…QDAAHQCRIQ (131 aa). Basic residues predominate over residues 17 to 31; it reads PHHRPGLRRHRKNTT. 3 stretches are compositionally biased toward basic and acidic residues: residues 35–48, 84–96, and 112–133; these read AAVDRPRRTRRGDA, DGREASRTAAEEK, and EKQHVGQDPDANGNHDDDDHAG. Residues 134–143 are compositionally biased toward low complexity; that stretch reads QDAAHQCRIQ.

This is an uncharacterized protein from Homo sapiens (Human).